An 837-amino-acid polypeptide reads, in one-letter code: Striatin-interacting protein 1 (837 aa).

Methionine 1 carries the N-acetylmethionine modification. 2 disordered regions span residues 1-66 (MEPA…SESP) and 333-423 (AASP…KGLP). A compositionally biased stretch (pro residues) spans 18-35 (PQPPPPPPPATAQPPPGA). Residues 47–60 (KAREFNRNQRKDSE) are compositionally biased toward basic and acidic residues. 3 positions are modified to phosphoserine: serine 59, serine 335, and serine 339. A compositionally biased stretch (basic and acidic residues) spans 356–377 (KALIKQDNLDAFNERDPYKADD). Residues 378-391 (SREEEEENDDDNSL) show a composition bias toward acidic residues. Position 788 is a phosphoserine (serine 788). The required for STRIPAK core complex formation stretch occupies residues 796-837 (DNCLQSVLGQRVDLPEDFQMNYDLWLEREVFSKPISWEELLQ).

It belongs to the STRIP family. In terms of assembly, part of the core of STRIPAK complexes composed of PP2A catalytic and scaffolding subunits, the striatins (PP2A regulatory subunits), the striatin-associated proteins MOB4, STRIP1 and STRIP2, PDCD10 and members of the STE20 kinases, such as STK24 and STK26. The STRIPAK complex can be extended by adapter proteins such as SLMAP:SIKE1, CTTNBP2 or CTTNBP2NL. Interacts with CDC42BPB. Interacts with CTTNBP2NL.

The protein localises to the cytoplasm. Functionally, plays a role in the regulation of cell morphology and cytoskeletal organization. Required in the cortical actin filament dynamics and cell shape. Part of the striatin-interacting phosphatase and kinase (STRIPAK) complexes. STRIPAK complexes have critical roles in protein (de)phosphorylation and are regulators of multiple signaling pathways including Hippo, MAPK, nuclear receptor and cytoskeleton remodeling. Different types of STRIPAK complexes are involved in a variety of biological processes such as cell growth, differentiation, apoptosis, metabolism and immune regulation. This is Striatin-interacting protein 1 (STRIP1) from Macaca fascicularis (Crab-eating macaque).